We begin with the raw amino-acid sequence, 497 residues long: Succinate-semialdehyde dehydrogenase [NADP(+)] (497 aa).

The active-site Proton acceptor is glutamate 264. Cysteine 298 acts as the Nucleophile in catalysis.

Belongs to the aldehyde dehydrogenase family. As to quaternary structure, homotetramer.

It is found in the cytoplasm. It catalyses the reaction succinate semialdehyde + NAD(+) + H2O = succinate + NADH + 2 H(+). The catalysed reaction is succinate semialdehyde + NADP(+) + H2O = succinate + NADPH + 2 H(+). It participates in amino-acid degradation; 4-aminobutanoate degradation. With respect to regulation, inhibited by AMP, ADP anf ATP. Catalyzes the oxidation of succinate semialdehyde to succinate. Can utilize both NAD(+) or NADP(+) as a coenzyme, but has a 2.5-fold lower activity with NADP(+) than with NAD(+). Functions in a gamma-aminobutyrate (GABA) degradation pathway that allows growth utilizing GABA as a nitrogen source. Functions in the GABA shunt, which allows to bypass 2 reactions in the TCA cycle by removing alpha-ketoglutarate from the cycle and feeding succinate and NADH back into the cycle. The chain is Succinate-semialdehyde dehydrogenase [NADP(+)] from Saccharomyces cerevisiae (strain ATCC 204508 / S288c) (Baker's yeast).